A 319-amino-acid chain; its full sequence is Glutathione synthetase (319 aa).

Residues 125-311 form the ATP-grasp domain; the sequence is KLFTAWFPEL…ITGMLMDAIE (187 aa). Residue 151-207 participates in ATP binding; it reads HQEHGDIILKPLDGMGGTSIFRVKQDDPNLSVIIETLTELSSRFCMAQNFLPAIKEG. 2 residues coordinate Mg(2+): E281 and N283.

The protein belongs to the prokaryotic GSH synthase family. Mg(2+) is required as a cofactor. Mn(2+) serves as cofactor.

The enzyme catalyses gamma-L-glutamyl-L-cysteine + glycine + ATP = glutathione + ADP + phosphate + H(+). It participates in sulfur metabolism; glutathione biosynthesis; glutathione from L-cysteine and L-glutamate: step 2/2. The protein is Glutathione synthetase of Yersinia pestis.